The primary structure comprises 301 residues: Syntaxin-17 (301 aa).

Ser-2 is modified (N-acetylserine). The Cytoplasmic segment spans residues 2–227 (SEDEEKVKLR…KNLQKAAKYK (226 aa)). N6-acetyllysine is present on Lys-41. Residues 49–128 (DKLHEEHINA…QVKNEEALLQ (80 aa)) are a coiled coil. A Phosphotyrosine; by ABL1 modification is found at Tyr-156. The 63-residue stretch at 161-223 (IPRDQNAAES…EEGTKNLQKA (63 aa)) folds into the t-SNARE coiled-coil homology domain. A helical transmembrane segment spans residues 228-248 (LAALPVAGAVIGGVVGGPIGL). The tract at residues 228–274 (LAALPVAGAVIGGVVGGPIGLLAGFKVAGIAAALGGGVLGFTGGKLI) is necessary and sufficient for localization to autophagosome. At 249 to 253 (LAGFK) the chain is on the lumenal side. A helical membrane pass occupies residues 254–274 (VAGIAAALGGGVLGFTGGKLI). The tract at residues 273-301 (LIQRRKQKMMEKLTSSCPDLPSQSDKKCS) is required for interaction with COPB1, TMED9 and TMED10. At 275-301 (QRRKQKMMEKLTSSCPDLPSQSDKKCS) the chain is on the cytoplasmic side. Position 288 is a phosphoserine (Ser-288). The Endoplasmic reticulum retention signal motif lies at 298-301 (KKCS).

This sequence belongs to the syntaxin family. Forms a SNARE complex composed of VAMP8, SNAP29 and STX17 involved in fusion of autophagosome with lysosome. May interact with VAMP7. May interact with VTI1B. Probably interacts with BET1, SCFD1 and SEC22B. Interacts with PTPN2 and ABL1; involved in STX17 phosphorylation. Interacts with COPB1. Interacts with TMED9 and TMED10; the interaction is direct. Interacts with RUBCNL/PACER; promoting targeting of RUBCNL/PACER to autophagosome. Interacts with VAMP8, SNAP29, VPS39 and VPS41; these interactions are increased in the absence of TMEM39A. Interacts with IRGM; promoting STX17 recruitment to autophagosomes. Interacts with ATG8 proteins GABARAP and MAP1LC3B. Interacts with RNF115; this interaction enhances STX17 stability which in turn promotes autophagosome maturation. Interacts with RAB39A (GTP-bound); the interaction promotes autophagosome-lysosome membrane fusion driven by STX17-SNAP29-VAMP8. Interacts with RAB39B; the interaction may promote a different fonction in autophagy as compared with RAB39A. In terms of processing, phosphorylated at Tyr-156 probably by ABL1. Dephosphorylation by PTPN2; regulates exit from the endoplasmic reticulum. In terms of tissue distribution, detected in all tissues examined with higher expression in steroidogenic tissues including testis and adrenal gland (at protein level). Highly expressed in liver and testis. Also found in brain, heart, kidney, lung, placenta, skeletal muscle and spleen.

It localises to the endoplasmic reticulum membrane. It is found in the smooth endoplasmic reticulum membrane. The protein resides in the endoplasmic reticulum-Golgi intermediate compartment membrane. Its subcellular location is the cytoplasmic vesicle. The protein localises to the autophagosome membrane. It localises to the COPII-coated vesicle membrane. It is found in the cytoplasm. The protein resides in the cytosol. Its subcellular location is the mitochondrion membrane. The protein localises to the autolysosome membrane. In terms of biological role, SNAREs, soluble N-ethylmaleimide-sensitive factor-attachment protein receptors, are essential proteins for fusion of cellular membranes. SNAREs localized on opposing membranes assemble to form a trans-SNARE complex, an extended, parallel four alpha-helical bundle that drives membrane fusion. STX17 is a SNARE of the autophagosome involved in autophagy through the direct control of autophagosome membrane fusion with the lysosome membrane. May also play a role in the early secretory pathway where it may maintain the architecture of the endoplasmic reticulum-Golgi intermediate compartment/ERGIC and Golgi and/or regulate transport between the endoplasmic reticulum, the ERGIC and the Golgi. The chain is Syntaxin-17 from Rattus norvegicus (Rat).